The following is a 277-amino-acid chain: Ras suppressor protein 1 (277 aa).

The interval 1-23 (MSKSLKKLVEESREKNQPEVDMS) is disordered. Residue S2 is modified to N-acetylserine. Residues 7–23 (KLVEESREKNQPEVDMS) show a composition bias toward basic and acidic residues. 7 LRR repeats span residues 41 to 63 (HITQLVLSHNKLTTVPPNVAELK), 64 to 85 (NLEVLNFFNNQIEELPTQISSL), 87 to 108 (KLKHLNLGMNRLNTLPRGFGSS), 110 to 133 (LLEVLELTYNNLNEHSLPGNFFYL), 135 to 156 (TLRALYLSDNDFEILPPDIGKL), 158 to 179 (KLQILSLRDNDLISLPKEIGEL), and 181 to 202 (QLKELHIQGNRLTVLPPELGNL). A disordered region spans residues 250-277 (MQANPEPPKKNNDKSKKISRKPLAAKNK). A compositionally biased stretch (basic and acidic residues) spans 256–265 (PPKKNNDKSK).

In terms of biological role, potentially plays a role in the Ras signal transduction pathway. Capable of suppressing v-Ras transformation in vitro. The protein is Ras suppressor protein 1 (Rsu1) of Mus musculus (Mouse).